The chain runs to 145 residues: Large ribosomal subunit protein uL15 (145 aa).

A disordered region spans residues 1–50; it reads MRLNTLSPAAGSKPEKQRRGRGIGSGLGKTGGRGVKGQTSRSGGGKVRAG. The segment covering 22 to 35 has biased composition (gly residues); the sequence is GIGSGLGKTGGRGV.

It belongs to the universal ribosomal protein uL15 family. Part of the 50S ribosomal subunit.

In terms of biological role, binds to the 23S rRNA. The sequence is that of Large ribosomal subunit protein uL15 from Aeromonas salmonicida (strain A449).